Reading from the N-terminus, the 261-residue chain is Cyclin-J18-like (261 aa).

The protein belongs to the cyclin family.

This Oryza sativa subsp. japonica (Rice) protein is Cyclin-J18-like.